The chain runs to 301 residues: Ribonuclease Z (301 aa).

Zn(2+) is bound by residues H63, H65, D67, H68, H141, D204, and H262. Catalysis depends on D67, which acts as the Proton acceptor.

This sequence belongs to the RNase Z family. As to quaternary structure, homodimer. It depends on Zn(2+) as a cofactor.

It carries out the reaction Endonucleolytic cleavage of RNA, removing extra 3' nucleotides from tRNA precursor, generating 3' termini of tRNAs. A 3'-hydroxy group is left at the tRNA terminus and a 5'-phosphoryl group is left at the trailer molecule.. Its function is as follows. Zinc phosphodiesterase, which displays some tRNA 3'-processing endonuclease activity. Probably involved in tRNA maturation, by removing a 3'-trailer from precursor tRNA. In Streptomyces coelicolor (strain ATCC BAA-471 / A3(2) / M145), this protein is Ribonuclease Z.